The chain runs to 886 residues: MEKSSSSSINPPSLSGDEIREAFINFFVQHNHQKLASSSLIPDDPTVLLTIAGMLPFKPIFLGLKESSTPRATSSQKCIRTNDIENVGRTARHHTFFEMLGNFSFGDYFKKEAIQWAWELSTEVFRLNPQNIVISVFKEDLEAEQIWKEVVGVDANRIIRMGAADNFWSSGATGPCGPCSELYFDFKPELGSDEIDLEDDSRFIEFYNLVFMQYNRDLEGNLEPLANCHIDTGMGLERMAQILQKKSNNYETDLIFPLIKAAALLAQLEYETTNKKNKTSLKIIGDHCRAVTHLICDGVSASNLGRGYILRRLIRRMIRHGRLVGIVQPFLPQLAEMAIELMKNAYPQLLEKKKIILNELKIEESRFLETLERGEKLLAEITSHECDLISGAQAFELYDTYGFPLELTEEIANEKGISVDINGFENEMAKQRKRAKEASVSIDLTEEGSIEREISLFDETRFEGYEKLETTSTVIGIFKNNESVKQAVQGDLVKIIVNRTPFYAESGGQIGDKGIITSQDLEVSVENVRKKKNIFIHSGIVNTGVLEINSSVQMNVTPSFRQRTTSNHTATHLLQSALKLSIDSSVSQRGSLVSNHRLRFDFNAPKPLTIKELEDMEVRINQWINEDHPIQIKTMPIKEAMAAGALAMFGEKYGDVVRVVDVPGVSMELCGGTHVTRTSQLGTFKIINETGIASGIRRIEAIAGPSVLDYFNERDLVVKELSKSFKVQSYEIVERVSSLQLELKDKTKELIKVKNDLALAKALGLASYAKSVGKSKLLIRRLDGVDGSGLQSAASSLIDHLGKYSAVIFGGIPNQEIDNKLVFVAAFSPDLVSDGLHAGKFISGVAKMCGGGGGGRPNLAQAGGSQPQSLDLALEKANENLTQQLS.

Residues histidine 568, histidine 572, cysteine 670, and histidine 674 each coordinate Zn(2+).

This sequence belongs to the class-II aminoacyl-tRNA synthetase family. Requires Zn(2+) as cofactor.

Its subcellular location is the cytoplasm. It carries out the reaction tRNA(Ala) + L-alanine + ATP = L-alanyl-tRNA(Ala) + AMP + diphosphate. In terms of biological role, catalyzes the attachment of alanine to tRNA(Ala) in a two-step reaction: alanine is first activated by ATP to form Ala-AMP and then transferred to the acceptor end of tRNA(Ala). Also edits incorrectly charged Ser-tRNA(Ala) and Gly-tRNA(Ala) via its editing domain. The polypeptide is Alanine--tRNA ligase (Prochlorococcus marinus (strain NATL1A)).